A 186-amino-acid polypeptide reads, in one-letter code: Hydra actinoporin-like toxin 5 (186 aa).

An N-terminal signal peptide occupies residues 1–20 (MLLYVCLVNLLLQSPSGVDS). The Cell attachment site motif lies at 158-160 (RDG).

The protein belongs to the actinoporin family. HALT subfamily. As to quaternary structure, octamer or nonamer in membranes. Monomer in the soluble state. In vitro, interacts with folate receptor alpha (of target organism).

It is found in the nematocyst. It localises to the secreted. Its subcellular location is the target cell membrane. Pore-forming protein that forms hydrophilic pores and causes cytolysis. Compared to equinatoxin-2 (AC P61914), it reveals lower cytolysis activity (5-12-fold difference, tested on erythrocytes), a larger pore size (probably 2-3 nm) and different affinity to membrane lipids (100-fold lower affinity to sphingomyelin). Binds to sulfatides (SFT) as well as to the two sphingolipids, lysophosphatidic acid (LPA) and sphingosine-1-phosphate (S1P). It seems to bind more strongly to LPA than to S1P and SFT. Shows cytolytic activity on HeLa cells, with a different potency than its paralogs (from most potent to less potent: HALT-4&gt;HALT-6~HALT-1&gt;HALT-3&gt;HALT-7&gt;HALT-2). Pore formation is a multi-step process that involves specific recognition of membrane lipid by a protein aromatic residues rich region, firm binding to the membrane (mainly driven by hydrophobic interactions) accompanied by the transfer of the N-terminal region to the lipid-water interface and finally pore formation after oligomerization of monomers. In vitro, binds to the folate receptor alpha (FOLR1), a GPI-anchored membrane protein that plays a major role in the uptake of folate/folic acid into cells via endocytosis, suggesting a possible involvement of this receptor in the mechanism of HALT-1-induced cell lysis. In vivo, does not cause visible paralysis in larvae of the blowfly Sarcophaga faculata, the most common arthropod prey of Hydra. This Hydra vulgaris (Hydra) protein is Hydra actinoporin-like toxin 5.